The chain runs to 186 residues: Serine hydrolase RBBP9 (186 aa).

Positions 63-67 (LHCDE) are involved in binding to RB1. Active-site charge relay system residues include S75, D138, and H165.

The protein belongs to the RBBP9 family. In terms of assembly, interacts with RB1; the interaction disrupts RB1 binding to E2F1. Interacts with RBL1 and RBL2. Expressed at higher levels in tumor tissues such as carcinoma.

The enzyme catalyses valacyclovir + H2O = acyclovir + L-valine + H(+). Inhibited by the natural product emetine produced by the ipecac root. Its function is as follows. Serine hydrolase. Catalyzes the hydrolytic activation of amino acid ester of the antiviral prodrug valacyclovir to its corresponding active drug, acyclovir. May negatively regulate basal or autocrine TGF-beta signaling by suppressing SMAD2-SMAD3 phosphorylation. May play a role in the transformation process due to its capacity to confer resistance to the growth-inhibitory effects of TGF-beta through interaction with RB1 and the subsequent displacement of E2F1. In Homo sapiens (Human), this protein is Serine hydrolase RBBP9.